The following is a 378-amino-acid chain: Anhydro-N-acetylmuramic acid kinase (378 aa).

22–29 is an ATP binding site; sequence GTSLDGAD.

Belongs to the anhydro-N-acetylmuramic acid kinase family.

It catalyses the reaction 1,6-anhydro-N-acetyl-beta-muramate + ATP + H2O = N-acetyl-D-muramate 6-phosphate + ADP + H(+). Its pathway is amino-sugar metabolism; 1,6-anhydro-N-acetylmuramate degradation. It functions in the pathway cell wall biogenesis; peptidoglycan recycling. Its function is as follows. Catalyzes the specific phosphorylation of 1,6-anhydro-N-acetylmuramic acid (anhMurNAc) with the simultaneous cleavage of the 1,6-anhydro ring, generating MurNAc-6-P. Is required for the utilization of anhMurNAc either imported from the medium or derived from its own cell wall murein, and thus plays a role in cell wall recycling. The protein is Anhydro-N-acetylmuramic acid kinase of Bordetella petrii (strain ATCC BAA-461 / DSM 12804 / CCUG 43448).